A 181-amino-acid polypeptide reads, in one-letter code: 6,7-dimethyl-8-ribityllumazine synthase (181 aa).

Residues Phe23, 61–63, and 85–87 each bind 5-amino-6-(D-ribitylamino)uracil; these read SFE and AVI. 90–91 lines the (2S)-2-hydroxy-3-oxobutyl phosphate pocket; it reads QT. Residue His93 is the Proton donor of the active site. Residue Phe118 coordinates 5-amino-6-(D-ribitylamino)uracil. A (2S)-2-hydroxy-3-oxobutyl phosphate-binding site is contributed by Arg132.

It belongs to the DMRL synthase family.

The catalysed reaction is (2S)-2-hydroxy-3-oxobutyl phosphate + 5-amino-6-(D-ribitylamino)uracil = 6,7-dimethyl-8-(1-D-ribityl)lumazine + phosphate + 2 H2O + H(+). It participates in cofactor biosynthesis; riboflavin biosynthesis; riboflavin from 2-hydroxy-3-oxobutyl phosphate and 5-amino-6-(D-ribitylamino)uracil: step 1/2. Functionally, catalyzes the formation of 6,7-dimethyl-8-ribityllumazine by condensation of 5-amino-6-(D-ribitylamino)uracil with 3,4-dihydroxy-2-butanone 4-phosphate. This is the penultimate step in the biosynthesis of riboflavin. This chain is 6,7-dimethyl-8-ribityllumazine synthase, found in Synechococcus elongatus (strain ATCC 33912 / PCC 7942 / FACHB-805) (Anacystis nidulans R2).